The chain runs to 89 residues: MSEKTVERGRRKVRIGYVVSDKMNKTIVVELEDRVKHPLYGKIIRTTSKVKAHDENEIAGVGDRVQLMETRPLSATKRWRLVEVLEKAK.

Belongs to the universal ribosomal protein uS17 family. Part of the 30S ribosomal subunit.

Functionally, one of the primary rRNA binding proteins, it binds specifically to the 5'-end of 16S ribosomal RNA. This chain is Small ribosomal subunit protein uS17, found in Nocardia farcinica (strain IFM 10152).